The chain runs to 215 residues: Ribonuclease HII (215 aa).

One can recognise an RNase H type-2 domain in the interval 19 to 214 (KNVIGVDEAG…KILETEEEKT (196 aa)). Positions 25, 26, and 121 each coordinate a divalent metal cation.

The protein belongs to the RNase HII family. Mn(2+) is required as a cofactor. Mg(2+) serves as cofactor.

The protein resides in the cytoplasm. The enzyme catalyses Endonucleolytic cleavage to 5'-phosphomonoester.. In terms of biological role, endonuclease that specifically degrades the RNA of RNA-DNA hybrids. The polypeptide is Ribonuclease HII (Fusobacterium nucleatum subsp. nucleatum (strain ATCC 25586 / DSM 15643 / BCRC 10681 / CIP 101130 / JCM 8532 / KCTC 2640 / LMG 13131 / VPI 4355)).